The primary structure comprises 261 residues: Carnitinyl-CoA dehydratase (261 aa).

Catalysis depends on Glu111, which acts as the Nucleophile. Glu131 (proton acceptor) is an active-site residue.

This sequence belongs to the enoyl-CoA hydratase/isomerase family.

It carries out the reaction (R)-carnitinyl-CoA = crotonobetainyl-CoA + H2O. It functions in the pathway amine and polyamine metabolism; carnitine metabolism. Catalyzes the reversible dehydration of L-carnitinyl-CoA to crotonobetainyl-CoA. This is Carnitinyl-CoA dehydratase from Citrobacter koseri (strain ATCC BAA-895 / CDC 4225-83 / SGSC4696).